A 449-amino-acid chain; its full sequence is Chromogranin-A (449 aa).

An N-terminal signal peptide occupies residues 1-18 (MRSAAVLALLLCAGQVIA). An intrachain disulfide couples Cys-35 to Cys-56. Residues 87-431 (AKERTHQQKK…EDQELESLSA (345 aa)) are disordered. Ser-99 carries the phosphoserine modification. Positions 107–140 (VLEKPNDQAEPKEVTEEVSSKDAAEKRDDFKEVE) are enriched in basic and acidic residues. Ser-142 is modified (phosphoserine). Ser-185 is a glycosylation site (O-linked (GalNAc...) serine). Tyr-191 carries the post-translational modification Phosphotyrosine. Phosphoserine is present on Ser-200. O-linked (GalNAc...) serine glycosylation occurs at Ser-204. At Ser-215 the chain carries Phosphoserine. A compositionally biased stretch (basic and acidic residues) spans 233–242 (EAEAREKAVP). Residue Thr-249 is glycosylated (O-linked (GalNAc...) threonine). Residues 279–297 (GAEEAKPPEGKGEWAHSRQ) are compositionally biased toward basic and acidic residues. Ser-295 is modified (phosphoserine). Gly-312 carries the glycine amide modification. A phosphoserine mark is found at Ser-315, Ser-325, and Ser-363. A compositionally biased stretch (basic and acidic residues) spans 323–351 (QLSKEWEDAKRWSKMDQLAKELTAEKRLE). Position 364 is a methionine sulfoxide (Met-364). Residues Ser-390, Ser-394, Ser-416, and Ser-430 each carry the phosphoserine modification. Residues 406–423 (YPEEKKEEEGSANRRPED) are compositionally biased toward basic and acidic residues. Ser-416 carries an O-linked (Xyl...) (chondroitin sulfate) serine glycan.

The protein belongs to the chromogranin/secretogranin protein family. Self-interacts; self-assembly is promoted in vitro by chondroitin sulfate attachment which occurs at mildly acidic pH conditions. Interacts with SCG3. Interacts with ITPR1 in the secretory granules. Post-translationally, in secretory granules, is attacked at both N- and C-terminal sides by proteolytic enzymes generating numerous peptides of various activities. Proteolytic processing can give rise to additional longer forms of catestatin peptides which display a less potent catecholamine release-inhibitory activity. In terms of processing, O-glycosylated; contains chondroitin sulfate (CS). CS attachment is pH-dependent, being observed at mildly acidic conditions of pH 5 but not at neutral pH, and promotes self-assembly in vitro. As to expression, highest concentration of GE-25 found in adrenal medulla with lower levels present in the pituitary, the intestinal mucosa and the pancreas. Also found in the brain.

It localises to the secreted. It is found in the cytoplasmic vesicle. The protein resides in the secretory vesicle. The protein localises to the neuronal dense core vesicle. Functionally, strongly inhibits glucose induced insulin release from the pancreas. Its function is as follows. Completely inhibits catecholamine release from chromaffin cells. Has antibacterial activity against M.luteus. Not active against E.coli. In terms of biological role, inhibits catecholamine release from chromaffin cells and noradrenergic neurons by acting as a non-competitive nicotinic cholinergic antagonist. Displays antibacterial activity against Gram-positive bacteria M.luteus and B.megaterium, and Gram-negative bacteria E.coli, and antifungal activity against a variety of filamentous fungi including A.fumigatus, N.hematococca, F.culmorum, F.oxyporum, T.mentagrophytes and several forms of Candida: C.albicans, C.tropicalis, C.glabrata and C.neoform. Can induce mast cell migration, degranulation and production of cytokines and chemokines. Functionally, has antibacterial activity against Gram-positive bacteria M.luteus, B.megaterium. Not active against Gram-positive bacteria B.cereus, B.subtilis, S.pyogenes, M.fortuitum, S.aureus and L.monocytogenes and against Gram-negative bacteria E.coli, E.cloacae, S.typhimurium, K.pneumoniae and P.aeruginosa. Possesses antifungal activity against N.crassa, A.fumigatus, A.brassicicola, N.hematococca, F.culmorum and F.oxyporum and against the yeast S.cerevisiae and C.albicans. Inactive against A.benhamiae. Its function is as follows. Has antifungal activity against N.crassa, A.fumigatus, A.brassicicola, N.hematococca, F.culmorum, F.oxyporum, A.benhamiae, C.neoformans, as well as against yeasts C.albicans, and C.tropicalis. Seems to be inactive against C.glabrata. Interacts with the fungal cell wall, crosses the plasma membrane and accumulates in fungal cells where it inhibits calcineurin activity. Regulates granule biogenesis in endocrine cells by up-regulating the transcription of protease nexin 1 (SERPINE2) via a cAMP-PKA-SP1 pathway. This leads to inhibition of granule protein degradation in the Golgi complex which in turn promotes granule formation. The protein is Chromogranin-A (CHGA) of Bos taurus (Bovine).